We begin with the raw amino-acid sequence, 323 residues long: o-succinylbenzoate synthase (323 aa).

The active-site Proton donor is the Lys-134. Residues Asp-162, Glu-191, and Asp-214 each coordinate Mg(2+). The active-site Proton acceptor is Lys-236.

This sequence belongs to the mandelate racemase/muconate lactonizing enzyme family. MenC type 1 subfamily. Requires a divalent metal cation as cofactor.

The catalysed reaction is (1R,6R)-6-hydroxy-2-succinyl-cyclohexa-2,4-diene-1-carboxylate = 2-succinylbenzoate + H2O. It participates in quinol/quinone metabolism; 1,4-dihydroxy-2-naphthoate biosynthesis; 1,4-dihydroxy-2-naphthoate from chorismate: step 4/7. The protein operates within quinol/quinone metabolism; menaquinone biosynthesis. Converts 2-succinyl-6-hydroxy-2,4-cyclohexadiene-1-carboxylate (SHCHC) to 2-succinylbenzoate (OSB). This is o-succinylbenzoate synthase from Yersinia pseudotuberculosis serotype O:1b (strain IP 31758).